We begin with the raw amino-acid sequence, 571 residues long: 15-cis-phytoene desaturase, chloroplastic/chromoplastic (571 aa).

A chloroplast and chromoplast-targeting transit peptide spans 1–96; sequence MDTGCLSSMN…FRNSERPSKP (96 aa). FAD-binding positions include alanine 107, 126 to 127, lysine 134, 151 to 152, and tyrosine 157; these read EA and HI. Arginine 292 lines the substrate pocket. Positions 334 and 523 each coordinate FAD. Alanine 531 contributes to the substrate binding site. FAD is bound at residue methionine 533.

The protein belongs to the carotenoid/retinoid oxidoreductase family. Homotetramer. FAD is required as a cofactor.

It is found in the plastid. Its subcellular location is the chloroplast. It localises to the chromoplast. The protein localises to the membrane. It carries out the reaction 2 a plastoquinone + 15-cis-phytoene = 9,9',15-tri-cis-zeta-carotene + 2 a plastoquinol. It participates in carotenoid biosynthesis; lycopene biosynthesis. Functionally, converts phytoene into zeta-carotene via the intermediary of phytofluene by the symmetrical introduction of two double bonds at the C-11 and C-11' positions of phytoene with a concomitant isomerization of two neighboring double bonds at the C9 and C9' positions from trans to cis. The sequence is that of 15-cis-phytoene desaturase, chloroplastic/chromoplastic (PDS1) from Zea mays (Maize).